Here is a 193-residue protein sequence, read N- to C-terminus: Zinc finger CCHC domain-containing protein 17 (193 aa).

An S1 motif; truncated domain is found at 1-40 (MSSCRVDKPSEIVDVGDKVWVKLIGREMKNDRIKVSLSMK). A Phosphoserine modification is found at Ser-66. A CCHC-type zinc finger spans residues 83–100 (TTCKKCGCKGHFAKDCFM). N6-acetyllysine is present on Lys-96. The tract at residues 113 to 193 (EEEEKEEAKS…KKKHKKKHKE (81 aa)) is disordered. Residues 118-129 (EEAKSAEFEKPV) show a composition bias toward basic and acidic residues. Residues 134 to 150 (PSRKRKKEKKKKKHRDR) are compositionally biased toward basic residues. The residue at position 135 (Ser-135) is a Phosphoserine. The segment covering 163 to 177 (DTGKRARHTSKDSKA) has biased composition (basic and acidic residues). Positions 178 to 193 (AKKKKKKKKHKKKHKE) are enriched in basic residues.

As to quaternary structure, may interact with PNN. May associate with the 60 S ribosomal subunit.

It localises to the nucleus. Its subcellular location is the nucleolus. This is Zinc finger CCHC domain-containing protein 17 (ZCCHC17) from Macaca fascicularis (Crab-eating macaque).